The chain runs to 509 residues: MYIIFSSIFAGFILGFLIRVFLGRLSLLDLEKNLTKVRVESQLEIENERRQIIANAKSQMLKEKNQQDRDIRDRKNEIVNLEKRLLQREETLDKRISALDKQQSRVDFKIKEFEQKEKVIREKEADLVKRLENISGLTREDARKIVIEKVEHESRRDAQVIINKSEQEAQLLADKVAKDILVSTMQRIVTEVSSEFTVASVELPNDEMKGRIIGKEGRNIRALETLIGADIIIDDTPEAVVISCFDPIRKELAKRTLERLVTDGRIHPARIEEVVYNVTNEINSIIQEEGEKVVFDLNIHGLDKRLIRGLGRLYFRSSYGQNVLSHSKETAIIGEILAKEMKLDPIVVKRACLLHDIGKGMESISDNSEGHAITGAELAQSCGESEIVVNAIAAHHNEVKPESLEAIVVQIADAISASRPGARRESLNNYINRLKRLEDIAYSFEGVQKCYAIQAGREVRIIVDNALINDEKSILLARDIAKKIEAEMRYPGKIKVTIIRETRVIEYAR.

The chain crosses the membrane as a helical span at residues 3–23 (IIFSSIFAGFILGFLIRVFLG). The KH domain maps to 197–257 (TVASVELPND…IRKELAKRTL (61 aa)). An HD domain is found at 323–418 (VLSHSKETAI…VQIADAISAS (96 aa)).

This sequence belongs to the RNase Y family.

Its subcellular location is the cell membrane. Functionally, endoribonuclease that initiates mRNA decay. The chain is Ribonuclease Y from Borreliella afzelii (strain PKo) (Borrelia afzelii).